We begin with the raw amino-acid sequence, 747 residues long: Probable cyclic nucleotide-gated ion channel 6 (747 aa).

Topologically, residues 1–117 (MFDTCGPKGV…DKFLLLCNKL (117 aa)) are cytoplasmic. Residues 118–138 (FVASCILAVSVDPLFLYLPFI) form a helical membrane-spanning segment. The Extracellular segment spans residues 139–150 (NDKAKCVGIDRK). A helical transmembrane segment spans residues 151–171 (LAIIVTTIRTVIDSFYLFHMA). Over 172 to 205 (LRFRTAYVAPSSRVFGRGELVIDPAQIAKRYLQQ) the chain is Cytoplasmic. The chain crosses the membrane as a helical span at residues 206–226 (YFIIDLLSVLPVPQIIVWRFL). Residues 227-239 (YTSRGANVLATKQ) are Extracellular-facing. The chain crosses the membrane as a helical span at residues 240–260 (ALRYIVLVQYIPRFLRMYPLS). The Cytoplasmic segment spans residues 261 to 280 (SELKRTAGVFAETAWAGAAY). The chain crosses the membrane as a helical span at residues 281–301 (YLLLYMLASHIVGALWYLLAL). Residues 302–407 (ERNNDCWSKA…GQGLETSTYP (106 aa)) are Extracellular-facing. A helical transmembrane segment spans residues 408–428 (GEVIFSITLAIAGLLLFALLI). Topologically, residues 429-747 (GNMQTYLQSL…PEPDFSAEDH (319 aa)) are cytoplasmic. A nucleoside 3',5'-cyclic phosphate contacts are provided by residues 514–638 (LFEN…SRQV) and aspartate 585. The calmodulin-binding stretch occupies residues 630–645 (FRRLHSRQVQHTFRFY). One can recognise an IQ domain in the interval 650–679 (RTWAACFMQAAWRRYIKRKKLEQLRKEEEE).

The protein belongs to the cyclic nucleotide-gated cation channel (TC 1.A.1.5) family. In terms of assembly, homotetramer or heterotetramer.

The protein localises to the cell membrane. In terms of biological role, probable cyclic nucleotide-gated ion channel. In Arabidopsis thaliana (Mouse-ear cress), this protein is Probable cyclic nucleotide-gated ion channel 6 (CNGC6).